A 466-amino-acid polypeptide reads, in one-letter code: 3-isopropylmalate dehydratase large subunit 1 (466 aa).

The [4Fe-4S] cluster site is built by C347, C407, and C410.

Belongs to the aconitase/IPM isomerase family. LeuC type 1 subfamily. As to quaternary structure, heterodimer of LeuC and LeuD. [4Fe-4S] cluster serves as cofactor.

The enzyme catalyses (2R,3S)-3-isopropylmalate = (2S)-2-isopropylmalate. Its pathway is amino-acid biosynthesis; L-leucine biosynthesis; L-leucine from 3-methyl-2-oxobutanoate: step 2/4. Its function is as follows. Catalyzes the isomerization between 2-isopropylmalate and 3-isopropylmalate, via the formation of 2-isopropylmaleate. This chain is 3-isopropylmalate dehydratase large subunit 1, found in Salmonella choleraesuis (strain SC-B67).